We begin with the raw amino-acid sequence, 398 residues long: Queuine tRNA-ribosyltransferase (398 aa).

The active-site Proton acceptor is the D102. Substrate is bound by residues 102–106, D156, Q205, and G232; that span reads DSGGF. The RNA binding stretch occupies residues 263–269; that stretch reads GVGTPED. The active-site Nucleophile is D282. The tract at residues 287–291 is RNA binding; important for wobble base 34 recognition; that stretch reads TRNAR. C320, C322, C325, and H362 together coordinate Zn(2+).

It belongs to the queuine tRNA-ribosyltransferase family. In terms of assembly, homodimer. Within each dimer, one monomer is responsible for RNA recognition and catalysis, while the other monomer binds to the replacement base PreQ1. Zn(2+) is required as a cofactor.

It carries out the reaction 7-aminomethyl-7-carbaguanine + guanosine(34) in tRNA = 7-aminomethyl-7-carbaguanosine(34) in tRNA + guanine. Its pathway is tRNA modification; tRNA-queuosine biosynthesis. Catalyzes the base-exchange of a guanine (G) residue with the queuine precursor 7-aminomethyl-7-deazaguanine (PreQ1) at position 34 (anticodon wobble position) in tRNAs with GU(N) anticodons (tRNA-Asp, -Asn, -His and -Tyr). Catalysis occurs through a double-displacement mechanism. The nucleophile active site attacks the C1' of nucleotide 34 to detach the guanine base from the RNA, forming a covalent enzyme-RNA intermediate. The proton acceptor active site deprotonates the incoming PreQ1, allowing a nucleophilic attack on the C1' of the ribose to form the product. After dissociation, two additional enzymatic reactions on the tRNA convert PreQ1 to queuine (Q), resulting in the hypermodified nucleoside queuosine (7-(((4,5-cis-dihydroxy-2-cyclopenten-1-yl)amino)methyl)-7-deazaguanosine). This is Queuine tRNA-ribosyltransferase from Polaromonas sp. (strain JS666 / ATCC BAA-500).